An 80-amino-acid polypeptide reads, in one-letter code: N-V protease (80 aa).

The protein belongs to the peptidase S8 family. In terms of assembly, monomer. As to expression, body cavity.

The protein localises to the secreted. Its activity is regulated as follows. Inhibited by the serine protease inhibitors DFP, PMSF and TLCK. Not inhibited by the serine protease inhibitors aprotinin, elastinal, SBTI and benzamidine, the cysteine protease inhibitors iodoacetate and E64, or the metalloprotease inhibitors EDTA and EGTA. Serine protease. Hydrolyzes the alpha chains of fibrin and fibrinogen completely, has lower activity on the beta and gamma chains of fibrin and fibrinogen. The protein is N-V protease of Alitta virens (Sandworm).